The sequence spans 161 residues: Allophycocyanin beta chain (161 aa).

Residue Asn71 is modified to N4-methylasparagine. Cys81 contacts (2R,3E)-phycocyanobilin.

Belongs to the phycobiliprotein family. As to quaternary structure, heterodimer of an alpha and a beta chain. In terms of processing, contains one covalently linked phycocyanobilin chromophore.

It is found in the cellular thylakoid membrane. Functionally, light-harvesting photosynthetic bile pigment-protein from the phycobiliprotein complex. Allophycocyanin has a maximum absorption at approximately 650 nanometers. The chain is Allophycocyanin beta chain (apcB) from Synechocystis sp. (strain PCC 6714) (Aphanocapsa sp. (strain PCC 6714)).